A 1067-amino-acid polypeptide reads, in one-letter code: Carbamoyl phosphate synthase large chain (1067 aa).

Positions 1–401 (MPLNKDIKKV…AFLKGIRSLE (401 aa)) are carboxyphosphate synthetic domain. Residues R129, R169, G175, G176, K208, V210, E215, G241, I242, H243, Q284, and E298 each coordinate ATP. Residues 133-327 (RDMMNRINQP…IAKVAAKIAL (195 aa)) form the ATP-grasp 1 domain. Residues Q284, E298, and N300 each coordinate Mg(2+). 3 residues coordinate Mn(2+): Q284, E298, and N300. The tract at residues 402-549 (IGKYSLEHKK…YSTYEQYDEV (148 aa)) is oligomerization domain. The carbamoyl phosphate synthetic domain stretch occupies residues 550–932 (VVSDNKKVVV…ALYKGFVGAS (383 aa)). The ATP-grasp 2 domain occupies 674–864 (DDLLERLNIA…IVDIATRIML (191 aa)). Residues R710, K749, L751, E755, G780, V781, H782, S783, Q823, and E835 each coordinate ATP. Positions 823, 835, and 837 each coordinate Mg(2+). Positions 823, 835, and 837 each coordinate Mn(2+). In terms of domain architecture, MGS-like spans 933–1067 (MYTGDKGKTI…NRELEVFNLI (135 aa)). The segment at 933–1067 (MYTGDKGKTI…NRELEVFNLI (135 aa)) is allosteric domain.

It belongs to the CarB family. In terms of assembly, composed of two chains; the small (or glutamine) chain promotes the hydrolysis of glutamine to ammonia, which is used by the large (or ammonia) chain to synthesize carbamoyl phosphate. Tetramer of heterodimers (alpha,beta)4. Requires Mg(2+) as cofactor. The cofactor is Mn(2+).

The enzyme catalyses hydrogencarbonate + L-glutamine + 2 ATP + H2O = carbamoyl phosphate + L-glutamate + 2 ADP + phosphate + 2 H(+). It catalyses the reaction hydrogencarbonate + NH4(+) + 2 ATP = carbamoyl phosphate + 2 ADP + phosphate + 2 H(+). It participates in amino-acid biosynthesis; L-arginine biosynthesis; carbamoyl phosphate from bicarbonate: step 1/1. The protein operates within pyrimidine metabolism; UMP biosynthesis via de novo pathway; (S)-dihydroorotate from bicarbonate: step 1/3. Its function is as follows. Large subunit of the glutamine-dependent carbamoyl phosphate synthetase (CPSase). CPSase catalyzes the formation of carbamoyl phosphate from the ammonia moiety of glutamine, carbonate, and phosphate donated by ATP, constituting the first step of 2 biosynthetic pathways, one leading to arginine and/or urea and the other to pyrimidine nucleotides. The large subunit (synthetase) binds the substrates ammonia (free or transferred from glutamine from the small subunit), hydrogencarbonate and ATP and carries out an ATP-coupled ligase reaction, activating hydrogencarbonate by forming carboxy phosphate which reacts with ammonia to form carbamoyl phosphate. This Clostridium perfringens (strain 13 / Type A) protein is Carbamoyl phosphate synthase large chain.